Here is a 159-residue protein sequence, read N- to C-terminus: Protein hunchback (159 aa).

Positions 18–34 (HNHHHHHHHGHHQHQQR) are enriched in basic residues. Disordered stretches follow at residues 18–49 (HNHHHHHHHGHHQHQQRHNSNSNASSPHQSPL) and 119–159 (LTPP…KYMA). Positions 140–159 (EPEKEHDLMSNSSEDMKYMA) are enriched in basic and acidic residues.

Belongs to the hunchback C2H2-type zinc-finger protein family.

The protein localises to the nucleus. Its function is as follows. Gap class segmentation protein that controls development of head structures. In Drosophila soonae (Fruit fly), this protein is Protein hunchback (hb).